We begin with the raw amino-acid sequence, 372 residues long: tRNA pseudouridine synthase D (372 aa).

Asp-85 (nucleophile) is an active-site residue. One can recognise a TRUD domain in the interval 160–330; the sequence is GFTNYFGYQR…MQGSRRFMWG (171 aa).

It belongs to the pseudouridine synthase TruD family.

The catalysed reaction is uridine(13) in tRNA = pseudouridine(13) in tRNA. In terms of biological role, responsible for synthesis of pseudouridine from uracil-13 in transfer RNAs. The protein is tRNA pseudouridine synthase D of Campylobacter jejuni subsp. jejuni serotype O:23/36 (strain 81-176).